The primary structure comprises 538 residues: Hydroxylamine reductase (538 aa).

[4Fe-4S] cluster contacts are provided by cysteine 3, cysteine 6, cysteine 15, and cysteine 21. Residues histidine 239, glutamate 263, cysteine 307, cysteine 394, cysteine 422, cysteine 447, glutamate 481, and lysine 483 each coordinate hybrid [4Fe-2O-2S] cluster. Cysteine 394 carries the cysteine persulfide modification.

This sequence belongs to the HCP family. [4Fe-4S] cluster is required as a cofactor. Requires hybrid [4Fe-2O-2S] cluster as cofactor.

It is found in the cytoplasm. The catalysed reaction is A + NH4(+) + H2O = hydroxylamine + AH2 + H(+). Functionally, catalyzes the reduction of hydroxylamine to form NH(3) and H(2)O. The sequence is that of Hydroxylamine reductase from Solidesulfovibrio magneticus (strain ATCC 700980 / DSM 13731 / RS-1) (Desulfovibrio magneticus).